We begin with the raw amino-acid sequence, 50 residues long: Large ribosomal subunit protein bL32 (50 aa).

The span at Met-1–Lys-26 shows a compositional bias: basic residues. The disordered stretch occupies residues Met-1–Asn-50.

The protein belongs to the bacterial ribosomal protein bL32 family.

This Aliarcobacter butzleri (strain RM4018) (Arcobacter butzleri) protein is Large ribosomal subunit protein bL32.